The primary structure comprises 71 residues: Protein SlyX homolog (71 aa).

It belongs to the SlyX family.

The protein is Protein SlyX homolog of Stutzerimonas stutzeri (strain A1501) (Pseudomonas stutzeri).